Consider the following 424-residue polypeptide: Probable methyltransferase EP424R (424 aa).

The Adrift-type SAM-dependent 2'-O-MTase domain occupies 103-315 (QIVTNAWLKM…TYIVGKNRLR (213 aa)). S-adenosyl-L-methionine-binding residues include Gly135 and Asp228. Residue Lys268 is the Proton acceptor of the active site.

It localises to the virion. The protein is Probable methyltransferase EP424R of Ornithodoros (relapsing fever ticks).